The following is a 117-amino-acid chain: Large ribosomal subunit protein bL20c (117 aa).

Belongs to the bacterial ribosomal protein bL20 family.

Its subcellular location is the plastid. It localises to the chloroplast. In terms of biological role, binds directly to 23S ribosomal RNA and is necessary for the in vitro assembly process of the 50S ribosomal subunit. It is not involved in the protein synthesizing functions of that subunit. The polypeptide is Large ribosomal subunit protein bL20c (Citrus sinensis (Sweet orange)).